The chain runs to 304 residues: MSWIERIKSNITPTRKASIPEGVWTKCDSCGQVLYRAELERNLEVCPKCDHHMRMTARNRLHSLLDEGSLVELGSELEPKDELKFRDSKKYKDRLASAQKETGEKDALVVMKGTLYGMPVVAAAFEFAFMGVSMGSVVGARFVRAVEQAQEDNCPLICFSASGGARMQEALMSLMQMAKTSAALAKMQERGLPYISVLTDPTMGGVSASFAMLGDLNIAEPKALIGFAGPRVIEQTVREKLPPRFQRSEFLIEKGAIDMIVRRPEMRLKLASILAKLMNLPAPNPEAPREGVVVPPVPDQEPEA.

Residues 23–292 enclose the CoA carboxyltransferase N-terminal domain; it reads VWTKCDSCGQ…PNPEAPREGV (270 aa). Residues Cys-27, Cys-30, Cys-46, and Cys-49 each coordinate Zn(2+). The segment at 27–49 adopts a C4-type zinc-finger fold; it reads CDSCGQVLYRAELERNLEVCPKC. Residues 284-304 are disordered; it reads NPEAPREGVVVPPVPDQEPEA. A compositionally biased stretch (pro residues) spans 295 to 304; sequence PPVPDQEPEA.

This sequence belongs to the AccD/PCCB family. As to quaternary structure, acetyl-CoA carboxylase is a heterohexamer composed of biotin carboxyl carrier protein (AccB), biotin carboxylase (AccC) and two subunits each of ACCase subunit alpha (AccA) and ACCase subunit beta (AccD). Zn(2+) is required as a cofactor.

It is found in the cytoplasm. It catalyses the reaction N(6)-carboxybiotinyl-L-lysyl-[protein] + acetyl-CoA = N(6)-biotinyl-L-lysyl-[protein] + malonyl-CoA. Its pathway is lipid metabolism; malonyl-CoA biosynthesis; malonyl-CoA from acetyl-CoA: step 1/1. Component of the acetyl coenzyme A carboxylase (ACC) complex. Biotin carboxylase (BC) catalyzes the carboxylation of biotin on its carrier protein (BCCP) and then the CO(2) group is transferred by the transcarboxylase to acetyl-CoA to form malonyl-CoA. The protein is Acetyl-coenzyme A carboxylase carboxyl transferase subunit beta of Shigella flexneri serotype 5b (strain 8401).